The following is a 486-amino-acid chain: MSSVKLWPTGASAVPLVSREELKKLEFVGKGGFGVVFRAHHRTWNHDVAVKIVNSKKISWEVKAMVNLRNENVLLLLGVTEDLQWDFVSGQALVTRFMENGSLAGLLQPECPRPWPLLCRLLQEVVLGMCYLHSLNPPLLHRDLKPSNILLDPELHAKLADFGLSTFQGGSQSGSGSGSGSRDSGGTLAYLDPELLFDVNLKASKASDVYSFGILVWAVLAGREAELVDKTSLIRETVCDRQSRPPLTELPPGSPETPGLEKLKELMIHCWGSQSENRPSFQDCEPKTNEVYNLVKDKVDAAVSEVKHYLSQHRSSGRNLSAREPSQRGTEMDCPRETMVSKMLDRLHLEEPSGPVPGKCPERQAQDTSVGPATPARTSSDPVAGTPQIPHTLPFRGTTPGPVFTETPGPHPQRNQGDGRHGTPWYPWTPPNPMTGPPALVFNNCSEVQIGNYNSLVAPPRTTASSSAKYDQAQFGRGRGWQPFHK.

S2 bears the Phosphoserine mark. One can recognise a Protein kinase domain in the interval 22 to 292; sequence LKKLEFVGKG…DCEPKTNEVY (271 aa). Residues 28-36 and K51 contribute to the ATP site; that span reads VGKGGFGVV. The Proton acceptor role is filled by D143. S165 carries the post-translational modification Phosphoserine. Residue T187 is modified to Phosphothreonine. A Phosphoserine; by autocatalysis modification is found at S204. T231 carries the post-translational modification Phosphothreonine; by autocatalysis. At S232 the chain carries Phosphoserine; by autocatalysis. T257 is subject to Phosphothreonine. S304 and S326 each carry phosphoserine. The interval 312–333 is disordered; that stretch reads QHRSSGRNLSAREPSQRGTEMD. Phosphothreonine is present on T338. Positions 349–388 are disordered; it reads LEEPSGPVPGKCPERQAQDTSVGPATPARTSSDPVAGTPQ. Phosphoserine is present on residues S353, S369, and S380. Over residues 366-381 the composition is skewed to polar residues; that stretch reads QDTSVGPATPARTSSD. T392 carries the post-translational modification Phosphothreonine. The short motif at 440–461 is the RIP homotypic interaction motif (RHIM) element; the sequence is LVFNNCSEVQIGNYNSLVAPPR. The segment at 462-486 is disordered; sequence TTASSSAKYDQAQFGRGRGWQPFHK. Residue R477 is modified to Omega-N-methylarginine.

Belongs to the protein kinase superfamily. TKL Ser/Thr protein kinase family. In terms of assembly, interacts (via RIP homotypic interaction motif) with RIPK1 (via RIP homotypic interaction motif); this interaction induces RIPK1 phosphorylation and formation of a RIPK1-RIPK3 necrosis-inducing complex. Interacts with MLKL; the interaction is direct and triggers necroptosis. Interacts with ZBP1 (via RIP homotypic interaction motif); interaction with ZBP1 activates RIPK3, triggering necroptosis. Upon TNF-induced necrosis, the RIPK1-RIPK3 dimer further interacts with PGAM5 and MLKL; the formation of this complex leads to PGAM5 phosphorylation and increase in PGAM5 phosphatase activity. Binds TRAF2 and is recruited to the TNFR-1 signaling complex. Interacts with PYGL, GLUL and GLUD1; these interactions result in activation of these metabolic enzymes. Interacts with BIRC2/c-IAP1, BIRC3/c-IAP2 and XIAP/BIRC4. Interacts with ARHGEF2. Interacts with PELI1 (via atypical FHA domain); the phosphorylated form at Thr-187 binds preferentially to PELI1. Interacts with BUB1B, TRAF2 and STUB1. Interacts with CASP6. Component of the AIM2 PANoptosome complex, a multiprotein complex that drives inflammatory cell death (PANoptosis). As to quaternary structure, (Microbial infection) Interacts (via RIP homotypic interaction motif) with murid herpesvirus protein RIR1; this interaction disrupts RIP3-RIP1 interactions characteristic of TNF-alpha induced necroptosis, thereby suppressing this death pathway. Post-translationally, RIPK1 and RIPK3 undergo reciprocal auto- and trans-phosphorylation. Autophosphorylated following interaction with ZBP1. Phosphorylation of Ser-204 plays a role in the necroptotic function of RIPK3. Autophosphorylates at Thr-231 and Ser-232 following activation by ZBP1: phosphorylation at these sites is a hallmark of necroptosis and is required for binding MLKL. Phosphorylation at Thr-187 is important for its kinase activity, interaction with PELI1 and for its ability to mediate TNF-induced necroptosis. Polyubiquitinated with 'Lys-48' and 'Lys-63'-linked chains by BIRC2/c-IAP1 and BIRC3/c-IAP2, leading to activation of NF-kappa-B. Ubiquitinated by STUB1 leading to its subsequent proteasome-dependent degradation. As to expression, expressed in embryo and in adult spleen, liver, testis, heart, brain and lung.

Its subcellular location is the cytoplasm. It is found in the cytosol. The protein resides in the nucleus. The enzyme catalyses L-seryl-[protein] + ATP = O-phospho-L-seryl-[protein] + ADP + H(+). It catalyses the reaction L-threonyl-[protein] + ATP = O-phospho-L-threonyl-[protein] + ADP + H(+). With respect to regulation, activity is stimulated by ZBP1, which senses double-stranded Z-RNA structures. RIPK3-dependent necroptosis is inhibited by RIPK1: RIPK1 prevents the ZBP1-induced activation of RIPK3 via FADD-mediated recruitment of CASP8, which cleaves RIPK1 and limits TNF-induced necroptosis. Inhibited by type II inhibitor 1-(4-fluorophenyl)-N-[3-fluoro-4-(1H-pyrrolo[2,3-b]pyridin-4-yloxy)phenyl]-2-oxo-1,2-dihydropyridine-3-carboxamide. In terms of biological role, serine/threonine-protein kinase that activates necroptosis and apoptosis, two parallel forms of cell death. Necroptosis, a programmed cell death process in response to death-inducing TNF-alpha family members, is triggered by RIPK3 following activation by ZBP1. Activated RIPK3 forms a necrosis-inducing complex and mediates phosphorylation of MLKL, promoting MLKL localization to the plasma membrane and execution of programmed necrosis characterized by calcium influx and plasma membrane damage. In addition to TNF-induced necroptosis, necroptosis can also take place in the nucleus in response to orthomyxoviruses infection: following ZBP1 activation, which senses double-stranded Z-RNA structures, nuclear RIPK3 catalyzes phosphorylation and activation of MLKL, promoting disruption of the nuclear envelope and leakage of cellular DNA into the cytosol. Also regulates apoptosis: apoptosis depends on RIPK1, FADD and CASP8, and is independent of MLKL and RIPK3 kinase activity. Phosphorylates RIPK1: RIPK1 and RIPK3 undergo reciprocal auto- and trans-phosphorylation. In some cell types, also able to restrict viral replication by promoting cell death-independent responses. In response to flavivirus infection in neurons, promotes a cell death-independent pathway that restricts viral replication: together with ZBP1, promotes a death-independent transcriptional program that modifies the cellular metabolism via up-regulation expression of the enzyme ACOD1/IRG1 and production of the metabolite itaconate. Itaconate inhibits the activity of succinate dehydrogenase, generating a metabolic state in neurons that suppresses replication of viral genomes. RIPK3 binds to and enhances the activity of three metabolic enzymes: GLUL, GLUD1, and PYGL. These metabolic enzymes may eventually stimulate the tricarboxylic acid cycle and oxidative phosphorylation, which could result in enhanced ROS production. The chain is Receptor-interacting serine/threonine-protein kinase 3 from Mus musculus (Mouse).